Consider the following 31-residue polypeptide: Protamine-1B (31 aa).

Positions 1–31 (MPRRRRASRRIRRRRRPRVSRRRRRGGRRRR) are disordered.

Testis.

It is found in the nucleus. It localises to the chromosome. In terms of biological role, protamines substitute for histones in the chromatin of sperm during the haploid phase of spermatogenesis. They compact sperm DNA into a highly condensed, stable and inactive complex. The sequence is that of Protamine-1B from Oncorhynchus mykiss (Rainbow trout).